We begin with the raw amino-acid sequence, 301 residues long: tRNA pseudouridine synthase B (301 aa).

Residue Asp-45 is the Nucleophile of the active site.

It belongs to the pseudouridine synthase TruB family. Type 1 subfamily.

The enzyme catalyses uridine(55) in tRNA = pseudouridine(55) in tRNA. Functionally, responsible for synthesis of pseudouridine from uracil-55 in the psi GC loop of transfer RNAs. This is tRNA pseudouridine synthase B from Streptomyces avermitilis (strain ATCC 31267 / DSM 46492 / JCM 5070 / NBRC 14893 / NCIMB 12804 / NRRL 8165 / MA-4680).